A 236-amino-acid chain; its full sequence is Regulatory protein cys-3 (236 aa).

Residues 26-89 are disordered; sequence TLGQLQPIQP…MSVPPTPGAR (64 aa). Polar residues predominate over residues 28 to 37; sequence GQLQPIQPNP. The bZIP domain occupies 99–162; the sequence is LAAEEDKRKR…KWLKGLVTEK (64 aa). The basic motif stretch occupies residues 105 to 137; sequence KRKRNTAASARFRIKKKQREQALEKSAKEMSEK. The interval 141–155 is leucine-zipper; it reads LEGRIQALETENKWL. The disordered stretch occupies residues 189-236; it reads AAAADKAEAAADKADAERAREESSFCVSTSSPSSDESVDTDNKKRRKD. A compositionally biased stretch (basic and acidic residues) spans 193–211; it reads DKAEAAADKADAERAREES. Positions 212-223 are enriched in low complexity; sequence SFCVSTSSPSSD.

This sequence belongs to the bZIP family. GCN4 subfamily. Binds DNA as a dimer.

The protein resides in the nucleus. Functionally, turns on the expression of structural genes which encode sulfur-catabolic enzymes. Binds to sequence elements upstream of these genes. This is Regulatory protein cys-3 (cys-3) from Neurospora crassa (strain ATCC 24698 / 74-OR23-1A / CBS 708.71 / DSM 1257 / FGSC 987).